Consider the following 475-residue polypeptide: Kynureninase (475 aa).

Pyridoxal 5'-phosphate-binding positions include Leu141, Thr142, 169-172 (FPSD), Asp254, His257, and Tyr279. Position 280 is an N6-(pyridoxal phosphate)lysine (Lys280). Pyridoxal 5'-phosphate-binding residues include Trp319 and Asn347.

Belongs to the kynureninase family. In terms of assembly, homodimer. Pyridoxal 5'-phosphate is required as a cofactor.

It is found in the cytoplasm. The enzyme catalyses L-kynurenine + H2O = anthranilate + L-alanine + H(+). The catalysed reaction is 3-hydroxy-L-kynurenine + H2O = 3-hydroxyanthranilate + L-alanine + H(+). The protein operates within amino-acid degradation; L-kynurenine degradation; L-alanine and anthranilate from L-kynurenine: step 1/1. It participates in cofactor biosynthesis; NAD(+) biosynthesis; quinolinate from L-kynurenine: step 2/3. Functionally, catalyzes the cleavage of L-kynurenine (L-Kyn) and L-3-hydroxykynurenine (L-3OHKyn) into anthranilic acid (AA) and 3-hydroxyanthranilic acid (3-OHAA), respectively. The protein is Kynureninase (bna5) of Sclerotinia sclerotiorum (strain ATCC 18683 / 1980 / Ss-1) (White mold).